A 579-amino-acid polypeptide reads, in one-letter code: Alpha-glucosidase (579 aa).

The active-site Nucleophile is the D212. E269 (proton donor) is an active-site residue.

The protein belongs to the glycosyl hydrolase 13 family.

The catalysed reaction is Hydrolysis of terminal, non-reducing (1-&gt;4)-linked alpha-D-glucose residues with release of alpha-D-glucose.. This is Alpha-glucosidase (mal1) from Schizosaccharomyces pombe (strain 972 / ATCC 24843) (Fission yeast).